The sequence spans 491 residues: mRNA cleavage and polyadenylation factor clp1 (491 aa).

2 residues coordinate ATP: E28 and K78. The tract at residues R128–P160 is disordered. Residues A130–G148 are compositionally biased toward low complexity. G171–S176 provides a ligand contact to ATP.

It belongs to the Clp1 family. Clp1 subfamily. As to quaternary structure, component of a pre-mRNA cleavage factor complex. Interacts directly with PCF11.

It is found in the nucleus. Its function is as follows. Required for endonucleolytic cleavage during polyadenylation-dependent pre-mRNA 3'-end formation. This Neurospora crassa (strain ATCC 24698 / 74-OR23-1A / CBS 708.71 / DSM 1257 / FGSC 987) protein is mRNA cleavage and polyadenylation factor clp1 (paa-7).